A 174-amino-acid polypeptide reads, in one-letter code: Chaperonin-like RBCX protein 1, chloroplastic (174 aa).

The N-terminal 45 residues, 1–45 (MESSSSLLHHSYLSYLNPKFGKRPLVSYPLMQSSRKCKQTRICSN), are a transit peptide targeting the chloroplast.

The protein belongs to the RbcX family. Homodimer. Interacts with rbcL, atpB and THI1.

The protein resides in the plastid. It localises to the chloroplast. Functionally, chaperone involved in RuBisCO assembly process. The sequence is that of Chaperonin-like RBCX protein 1, chloroplastic from Arabidopsis thaliana (Mouse-ear cress).